Consider the following 408-residue polypeptide: Peptidase T (408 aa).

His78 serves as a coordination point for Zn(2+). Residue Asp80 is part of the active site. Asp141 is a binding site for Zn(2+). Catalysis depends on Glu175, which acts as the Proton acceptor. The Zn(2+) site is built by Glu176, Asp198, and His380.

The protein belongs to the peptidase M20B family. The cofactor is Zn(2+).

Its subcellular location is the cytoplasm. It catalyses the reaction Release of the N-terminal residue from a tripeptide.. Its function is as follows. Cleaves the N-terminal amino acid of tripeptides. The chain is Peptidase T from Clostridium botulinum (strain Kyoto / Type A2).